Consider the following 122-residue polypeptide: Large ribosomal subunit protein uL14 (122 aa).

It belongs to the universal ribosomal protein uL14 family. As to quaternary structure, part of the 50S ribosomal subunit. Forms a cluster with proteins L3 and L19. In the 70S ribosome, L14 and L19 interact and together make contacts with the 16S rRNA in bridges B5 and B8.

Binds to 23S rRNA. Forms part of two intersubunit bridges in the 70S ribosome. This is Large ribosomal subunit protein uL14 from Clostridium botulinum (strain 657 / Type Ba4).